The sequence spans 504 residues: Cytochrome P450 6B7 (504 aa).

C445 is a binding site for heme.

It belongs to the cytochrome P450 family. It depends on heme as a cofactor.

The protein localises to the endoplasmic reticulum membrane. It localises to the microsome membrane. The catalysed reaction is an organic molecule + reduced [NADPH--hemoprotein reductase] + O2 = an alcohol + oxidized [NADPH--hemoprotein reductase] + H2O + H(+). The polypeptide is Cytochrome P450 6B7 (CYP6B7) (Helicoverpa armigera (Cotton bollworm)).